The sequence spans 154 residues: 6,7-dimethyl-8-ribityllumazine synthase (154 aa).

5-amino-6-(D-ribitylamino)uracil contacts are provided by residues F22, 56-58 (AFE), and 80-82 (AVI). 85-86 (AT) serves as a coordination point for (2S)-2-hydroxy-3-oxobutyl phosphate. H88 serves as the catalytic Proton donor. F113 is a binding site for 5-amino-6-(D-ribitylamino)uracil. Position 127 (R127) interacts with (2S)-2-hydroxy-3-oxobutyl phosphate.

This sequence belongs to the DMRL synthase family. Forms an icosahedral capsid composed of 60 subunits, arranged as a dodecamer of pentamers.

It carries out the reaction (2S)-2-hydroxy-3-oxobutyl phosphate + 5-amino-6-(D-ribitylamino)uracil = 6,7-dimethyl-8-(1-D-ribityl)lumazine + phosphate + 2 H2O + H(+). The protein operates within cofactor biosynthesis; riboflavin biosynthesis; riboflavin from 2-hydroxy-3-oxobutyl phosphate and 5-amino-6-(D-ribitylamino)uracil: step 1/2. Functionally, catalyzes the formation of 6,7-dimethyl-8-ribityllumazine by condensation of 5-amino-6-(D-ribitylamino)uracil with 3,4-dihydroxy-2-butanone 4-phosphate. This is the penultimate step in the biosynthesis of riboflavin. This Geobacillus thermodenitrificans (strain NG80-2) protein is 6,7-dimethyl-8-ribityllumazine synthase.